A 467-amino-acid polypeptide reads, in one-letter code: Gamma-aminobutyric acid receptor subunit rho-3 (467 aa).

A signal peptide spans 1–24 (MVLAFQLVSFTYIWIILKPNVCAA). At 25–266 (SNIKMTHQRC…LFINFVLRRH (242 aa)) the chain is on the extracellular side. 2 residues coordinate 4-aminobutanoate: R111 and S175. C184 and C198 are joined by a disulfide. A 4-aminobutanoate-binding site is contributed by E203. The N-linked (GlcNAc...) asparagine glycan is linked to N220. Residues 267–287 (VFFFVLQTYFPAILMVMLSWV) traverse the membrane as a helical segment. Topologically, residues 288–299 (SFWIDRRAVPAR) are cytoplasmic. The helical transmembrane segment at 300–320 (VSLGITTVLTMSTIITAVSAS) threads the bilayer. The Extracellular segment spans residues 321 to 331 (MPQVSYLKAVD). Residues 332 to 352 (VYLWVSSLFVFLSVIEYAAVN) traverse the membrane as a helical segment. The segment at 347–448 (EYAAVNYLTT…NNHVIDTYSR (102 aa)) is interaction with SQSTM1. Topologically, residues 353–446 (YLTTVEERKQ…LENNHVIDTY (94 aa)) are cytoplasmic. The chain crosses the membrane as a helical span at residues 447-467 (SRILFPIVYILFNLFYWGVYV).

The protein belongs to the ligand-gated ion channel (TC 1.A.9) family. Gamma-aminobutyric acid receptor (TC 1.A.9.5) subfamily. GABRR3 sub-subfamily. Three rho subunits (rho-1/GBRR1, rho-2/GBRR2 and rho-3/GBRR3) coassemble either to form functional homopentamers or heteropentamers. Forms a ternary complex with SQSTM1 and PRKCZ.

It is found in the postsynaptic cell membrane. It localises to the cell membrane. The enzyme catalyses chloride(in) = chloride(out). With respect to regulation, inhibited by TPMPA, a rho-specific antagonist, when forming a homopentamer. In terms of biological role, rho subunit of the pentameric ligand-gated chloride channels responsible for mediating the effects of gamma-aminobutyric acid (GABA), the major inhibitory neurotransmitter in the brain. Rho-containing GABA-gated chloride channels are a subclass of GABA(A) receptors (GABAARs) entirely composed of rho subunits, where GABA molecules bind at the rho intersubunit interfaces. When activated by GABA, rho-GABAARs selectively allow the flow of chloride anions across the cell membrane down their electrochemical gradient. The polypeptide is Gamma-aminobutyric acid receptor subunit rho-3 (Homo sapiens (Human)).